A 123-amino-acid chain; its full sequence is Small ribosomal subunit protein uS12 (123 aa).

Aspartate 89 is subject to 3-methylthioaspartic acid.

This sequence belongs to the universal ribosomal protein uS12 family. In terms of assembly, part of the 30S ribosomal subunit. Contacts proteins S8 and S17. May interact with IF1 in the 30S initiation complex.

With S4 and S5 plays an important role in translational accuracy. In terms of biological role, interacts with and stabilizes bases of the 16S rRNA that are involved in tRNA selection in the A site and with the mRNA backbone. Located at the interface of the 30S and 50S subunits, it traverses the body of the 30S subunit contacting proteins on the other side and probably holding the rRNA structure together. The combined cluster of proteins S8, S12 and S17 appears to hold together the shoulder and platform of the 30S subunit. The protein is Small ribosomal subunit protein uS12 of Methylobacterium nodulans (strain LMG 21967 / CNCM I-2342 / ORS 2060).